An 83-amino-acid chain; its full sequence is MRSMEGSVPKYPEPTEGSIGASGAKRSWPEVVGMSAEKAKEIILRDKPDAQIEVIPVDAMVPLDFNPNRIFILVAVARTPTVG.

Residues 1–28 are disordered; it reads MRSMEGSVPKYPEPTEGSIGASGAKRSW.

The protein belongs to the protease inhibitor I13 (potato type I serine protease inhibitor) family.

In terms of biological role, inhibits both subtilisin and chymotrypsin. This is Subtilisin-chymotrypsin inhibitor CI-1B from Hordeum vulgare (Barley).